The chain runs to 365 residues: MTELKRTPLYEQHRRAGAKLIDFGGWEMPVQYAGVIEEHKAVRSKAGLFDVSHMGEVELKGKDSLAFLQYLLTNDVSRIQDNQIQYSPMCTSAGGVVDDLLVYRYSREHFLLVVNAANTDKDFAWMQAQAEGFEISLENRSGDFAQLALQGPWAEKILQKLTSMDLAQINYYWFKHGEVDGVLCLISRTGYTGEDGFEIYLPPEHAPRMWERILEVGGSEGVQPIGLGARDTLRFEARLPLYGNELGPDITPLEAGLGFFVKLEKDNFIGKEALSAQKEKGVPRKLVGLEMIERGIARSHYPLQKEGKEIGFITSGSFSPTLNKNIALGLIPPEYAQIGETLDVIIRGKAVKARIIPSLFYKRQG.

It belongs to the GcvT family. In terms of assembly, the glycine cleavage system is composed of four proteins: P, T, L and H.

It carries out the reaction N(6)-[(R)-S(8)-aminomethyldihydrolipoyl]-L-lysyl-[protein] + (6S)-5,6,7,8-tetrahydrofolate = N(6)-[(R)-dihydrolipoyl]-L-lysyl-[protein] + (6R)-5,10-methylene-5,6,7,8-tetrahydrofolate + NH4(+). The glycine cleavage system catalyzes the degradation of glycine. The chain is Aminomethyltransferase from Desulfitobacterium hafniense (strain Y51).